Consider the following 295-residue polypeptide: Histamine N-methyltransferase (295 aa).

A substrate-binding site is contributed by Glu28. The S-adenosyl-L-methionine site is built by Gly60, Glu89, Gln94, Ser120, and Ile143. Asn284 is a binding site for substrate.

Belongs to the class I-like SAM-binding methyltransferase superfamily. HNMT family. Monomer.

It is found in the cytoplasm. The enzyme catalyses histamine + S-adenosyl-L-methionine = N(tau)-methylhistamine + S-adenosyl-L-homocysteine + H(+). Its function is as follows. Inactivates histamine by N-methylation. Plays an important role in degrading histamine and in regulating the airway response to histamine. This Mus musculus (Mouse) protein is Histamine N-methyltransferase (Hnmt).